A 316-amino-acid polypeptide reads, in one-letter code: tRNA dimethylallyltransferase (316 aa).

ATP is bound at residue 17 to 24; that stretch reads GPTASGKT. 19-24 contributes to the substrate binding site; it reads TASGKT. Interaction with substrate tRNA stretches follow at residues 42–45, 166–170, and 247–252; these read DSAL, QRLSR, and RCVGYR.

It belongs to the IPP transferase family. In terms of assembly, monomer. The cofactor is Mg(2+).

The catalysed reaction is adenosine(37) in tRNA + dimethylallyl diphosphate = N(6)-dimethylallyladenosine(37) in tRNA + diphosphate. In terms of biological role, catalyzes the transfer of a dimethylallyl group onto the adenine at position 37 in tRNAs that read codons beginning with uridine, leading to the formation of N6-(dimethylallyl)adenosine (i(6)A). This chain is tRNA dimethylallyltransferase, found in Salmonella paratyphi A (strain ATCC 9150 / SARB42).